Consider the following 362-residue polypeptide: MRDDTCDYLSLFLNDTPLLDVRAPVEFAKGAFPGTTNLALINDEERHRIGICYKQHGQQAAIDLGNTLVCGEERERRLYAWQQWWQANPNGYLYCFRGGLRSQTTQAWLREIGIDAPLVTGGYKALRRFLIDEMEACIANLPLEVLCGRTGCAKTRVIEQQPNAIDLEGLAHHRGSSFGRRPGGQPSQIDFENSLSIALIKQRAAQPVSILVEDESKLIGRCHLPFSLQDQIKSQPRIIIEESLESRVQVTLEDYVIGPLQEYARYFGEHDALKQLGDELLASMDRIRRRLGGIRHQQLRQQLQEALAVQANCGNTELHREWIHSLLADYYDPMYDYMLSRRAGTILFQGSRAEVSAFLNSR.

The Rhodanese domain maps to 12-135 (FLNDTPLLDV…LRRFLIDEME (124 aa)). C95 (S-selanylcysteine intermediate) is an active-site residue.

The protein belongs to the SelU family. In terms of assembly, monomer.

It carries out the reaction 5-methylaminomethyl-2-thiouridine(34) in tRNA + selenophosphate + (2E)-geranyl diphosphate + H2O + H(+) = 5-methylaminomethyl-2-selenouridine(34) in tRNA + (2E)-thiogeraniol + phosphate + diphosphate. It catalyses the reaction 5-methylaminomethyl-2-thiouridine(34) in tRNA + (2E)-geranyl diphosphate = 5-methylaminomethyl-S-(2E)-geranyl-thiouridine(34) in tRNA + diphosphate. The enzyme catalyses 5-methylaminomethyl-S-(2E)-geranyl-thiouridine(34) in tRNA + selenophosphate + H(+) = 5-methylaminomethyl-2-(Se-phospho)selenouridine(34) in tRNA + (2E)-thiogeraniol. The catalysed reaction is 5-methylaminomethyl-2-(Se-phospho)selenouridine(34) in tRNA + H2O = 5-methylaminomethyl-2-selenouridine(34) in tRNA + phosphate. Involved in the post-transcriptional modification of the uridine at the wobble position (U34) of tRNA(Lys), tRNA(Glu) and tRNA(Gln). Catalyzes the conversion of 2-thiouridine (S2U-RNA) to 2-selenouridine (Se2U-RNA). Acts in a two-step process involving geranylation of 2-thiouridine (S2U) to S-geranyl-2-thiouridine (geS2U) and subsequent selenation of the latter derivative to 2-selenouridine (Se2U) in the tRNA chain. The sequence is that of tRNA 2-selenouridine synthase from Alcanivorax borkumensis (strain ATCC 700651 / DSM 11573 / NCIMB 13689 / SK2).